The following is a 603-amino-acid chain: NADH-ubiquinone oxidoreductase chain 5 (603 aa).

The next 16 helical transmembrane spans lie at 4–24 (LPTLTLISLIILTSPIMLSPL), 38–58 (MAVSYAFMVSMVPAMIFMHSG), 87–107 (LIFMPVALFVTWSIMEFSLWY), 117–137 (FFKYLLLFLITMIILITANNL), 140–160 (LFIGWEGVGIMSFLLIGWWYG), 171–191 (AMIYNRIGDVGFVAAMAWFLL), 211–233 (LPLTGLLLAAMGKSAQFGLHPWL), 241–261 (TPVSALLHSSTMVVAGVFLLI), 273–293 (ILTLTLCVGAITTLFTAICAL), 301–320 (IIAFSTSSQLGLMMVTIGIN), 331–351 (THAFFKAMLFMCSGSIIHSLG), 366–386 (LPFTTTALIIGSLALTGMPFL), 409–429 (LLITFIATSMTAVYSTRIIFF), 457–477 (LMLGSIFAGFLISSNLPPTTV), 488–508 (FMALAVTLLGFALAIELSSFT), and 583–603 (MIKLYFLSFLISLTLGLLLII).

This sequence belongs to the complex I subunit 5 family.

The protein localises to the mitochondrion inner membrane. It catalyses the reaction a ubiquinone + NADH + 5 H(+)(in) = a ubiquinol + NAD(+) + 4 H(+)(out). In terms of biological role, core subunit of the mitochondrial membrane respiratory chain NADH dehydrogenase (Complex I) that is believed to belong to the minimal assembly required for catalysis. Complex I functions in the transfer of electrons from NADH to the respiratory chain. The immediate electron acceptor for the enzyme is believed to be ubiquinone. The protein is NADH-ubiquinone oxidoreductase chain 5 (MT-ND5) of Dugong dugon (Dugong).